We begin with the raw amino-acid sequence, 372 residues long: Alanine dehydrogenase 1 (372 aa).

Residue H94 is part of the active site. 170 to 200 (TYVIFGGGVAATNAANVALGLNAKVIIIELN) is an NAD(+) binding site.

Belongs to the AlaDH/PNT family.

It catalyses the reaction L-alanine + NAD(+) + H2O = pyruvate + NH4(+) + NADH + H(+). The protein operates within amino-acid degradation; L-alanine degradation via dehydrogenase pathway; NH(3) and pyruvate from L-alanine: step 1/1. May play a role in cell wall synthesis as L-alanine is an important constituent of the peptidoglycan layer. This Staphylococcus aureus (strain MSSA476) protein is Alanine dehydrogenase 1 (ald1).